A 146-amino-acid polypeptide reads, in one-letter code: L-fucose mutarotase (146 aa).

His-22 (proton donor) is an active-site residue. Substrate is bound by residues Asp-30, Arg-109, and 131-133; that span reads YGN.

It belongs to the RbsD / FucU family. FucU mutarotase subfamily. As to quaternary structure, homodecamer.

It localises to the cytoplasm. It catalyses the reaction alpha-L-fucose = beta-L-fucose. Its pathway is carbohydrate metabolism; L-fucose metabolism. Its function is as follows. Involved in the anomeric conversion of L-fucose. The sequence is that of L-fucose mutarotase from Glaesserella parasuis serovar 5 (strain SH0165) (Haemophilus parasuis).